The primary structure comprises 125 residues: Small ribosomal subunit protein uS12m (125 aa).

The tract at residues 1–27 (MPTKNQLIRHGREEKRRTDRTRALDQC) is disordered. Residues 10–23 (HGREEKRRTDRTRA) show a composition bias toward basic and acidic residues.

This sequence belongs to the universal ribosomal protein uS12 family.

The protein resides in the mitochondrion. Its function is as follows. Protein S12 is involved in the translation initiation step. The polypeptide is Small ribosomal subunit protein uS12m (RPS12) (Triticum aestivum (Wheat)).